Here is a 338-residue protein sequence, read N- to C-terminus: Phytanoyl-CoA dioxygenase, peroxisomal (338 aa).

A peroxisome-targeting transit peptide spans 1–30 (MEQLRAAARLQIVLGHLGRPSAGAVVAHPT). Lys-59 and Lys-108 each carry N6-succinyllysine. 2-oxoglutarate-binding positions include Lys-120, Met-157, 175 to 177 (HQD), and Trp-193. Residues His-175 and Asp-177 each contribute to the Fe cation site. N6-succinyllysine is present on residues Lys-231 and Lys-252. Position 264 (His-264) interacts with Fe cation. 2 residues coordinate 2-oxoglutarate: Ser-266 and Arg-275. Phosphoserine is present on Ser-317.

This sequence belongs to the PhyH family. Interacts with FKBP52. Interacts with PHYHIP. Fe cation serves as cofactor. The cofactor is L-ascorbate. It depends on ATP as a cofactor. Requires Mg(2+) as cofactor. As to expression, expressed in liver, kidney, and T-cells, but not in spleen, brain, heart, lung and skeletal muscle.

It is found in the peroxisome. It carries out the reaction phytanoyl-CoA + 2-oxoglutarate + O2 = 2-hydroxyphytanoyl-CoA + succinate + CO2. The catalysed reaction is 3-methylhexadecanoyl-CoA + 2-oxoglutarate + O2 = 2-hydroxy-3-methylhexadecanoyl-CoA + succinate + CO2. It catalyses the reaction hexadecanoyl-CoA + 2-oxoglutarate + O2 = 2-hydroxyhexadecanoyl-CoA + succinate + CO2. The enzyme catalyses octanoyl-CoA + 2-oxoglutarate + O2 = 2-hydroxyoctanoyl-CoA + succinate + CO2. It carries out the reaction decanoyl-CoA + 2-oxoglutarate + O2 = 2-hydroxydecanoyl-CoA + succinate + CO2. The catalysed reaction is 3-methylbutanoyl-CoA + 2-oxoglutarate + O2 = 2-hydroxy-3-methylbutanoyl-CoA + succinate + CO2. It catalyses the reaction heptadecanoyl-CoA + 2-oxoglutarate + O2 = 2-hydroxyheptadecanoyl-CoA + succinate + CO2. The enzyme catalyses eicosanoyl-CoA + 2-oxoglutarate + O2 = 2-hydroxyeicosanoyl-CoA + succinate + CO2. It carries out the reaction octadecanoyl-CoA + 2-oxoglutarate + O2 = 2-hydroxyoctadecanoyl-CoA + succinate + CO2. The catalysed reaction is dodecanoyl-CoA + 2-oxoglutarate + O2 = 2-hydroxydodecanoyl-CoA + succinate + CO2. It catalyses the reaction tetradecanoyl-CoA + 2-oxoglutarate + O2 = 2-hydroxytetradecanoyl-CoA + succinate + CO2. The enzyme catalyses hexanoyl-CoA + 2-oxoglutarate + O2 = 2-hydroxyhexanoyl-CoA + succinate + CO2. It carries out the reaction butanoyl-CoA + 2-oxoglutarate + O2 = 2-hydroxybutanoyl-CoA + succinate + CO2. The catalysed reaction is 3-methylnonanoyl-CoA + 2-oxoglutarate + O2 = 2-hydroxy-3-methylnonanoyl-CoA + succinate + CO2. It catalyses the reaction 3-methylundecanoyl-CoA + 2-oxoglutarate + O2 = 2-hydroxy-3-methylundecanoyl-CoA + succinate + CO2. The enzyme catalyses 3-methyldodecanoyl-CoA + 2-oxoglutarate + O2 = 2-hydroxy-3-methyldodecanoyl-CoA + succinate + CO2. Its pathway is lipid metabolism; fatty acid metabolism. Its function is as follows. Catalyzes the 2-hydroxylation of not only racemic phytanoyl-CoA and the isomers of 3-methylhexadecanoyl-CoA, but also a variety of other mono-branched 3-methylacyl-CoA esters (with a chain length of at least seven carbon atoms) and straight-chain acyl-CoA esters (with a chain length longer than four carbon atoms). Does not hydroxylate long and very long straight chain acyl-CoAs or 2-methyl- and 4-methyl-branched acyl-CoAs. The protein is Phytanoyl-CoA dioxygenase, peroxisomal (PHYH) of Homo sapiens (Human).